The chain runs to 594 residues: Nucleolar protein 56 (594 aa).

Glycyl lysine isopeptide (Lys-Gly) (interchain with G-Cter in SUMO2) cross-links involve residues lysine 87, lysine 230, and lysine 240. In terms of domain architecture, Nop spans 292–410 (VAPSLSALIG…VEERLSFYET (119 aa)). Position 314 is a phosphoserine (serine 314). An Omega-N-methylarginine modification is found at arginine 359. Composition is skewed to low complexity over residues 458-469 (ALASSENSSSTP) and 488-504 (QEVP…ISFS). The segment at 458–594 (ALASSENSSS…KKFHKASQED (137 aa)) is disordered. Phosphoserine is present on residues serine 466 and serine 467. Threonine 468 is modified (phosphothreonine). A phosphoserine mark is found at serine 511, serine 519, serine 520, and serine 537. Lysine 540 is covalently cross-linked (Glycyl lysine isopeptide (Lys-Gly) (interchain with G-Cter in SUMO2)). Lysine 561 is subject to N6-acetyllysine. At serine 563 the chain carries Phosphoserine. A Glycyl lysine isopeptide (Lys-Gly) (interchain with G-Cter in SUMO2) cross-link involves residue lysine 564. Phosphoserine occurs at positions 569, 570, 579, and 581. The segment covering 580-594 (SSKKKKKFHKASQED) has biased composition (basic residues).

The protein belongs to the NOP5/NOP56 family. In terms of assembly, part of a large pre-ribosomal ribonucleoprotein (RNP) complex, that consists of at least 62 ribosomal proteins, 45 nonribosomal proteins and both pre-rRNA and mature rRNA species. Within this complex directly interacts with TCOF1 in an RNA-independent manner. Core component of box C/D small nucleolar ribonucleoprotein (snoRNP) particles; the core proteins SNU13, NOP56, NOP58 and FBL or FBLL1 assemble stepwise onto the snoRNA. Interacts with NOP1 and NOP58. Interacts with NUFIP1, RUVBL1 and RUVBL2; RUVBL1:RUVBL2 seem to bridge the association of NOP56 with NUFIP1. Part of the small subunit (SSU) processome, composed of more than 70 proteins and the RNA chaperone small nucleolar RNA (snoRNA) U3. Interacts with NOP2 and FBL.

Its subcellular location is the nucleus. It is found in the nucleolus. The protein localises to the cytoplasm. It localises to the nucleoplasm. Functionally, involved in the early to middle stages of 60S ribosomal subunit biogenesis. Required for the biogenesis of box C/D snoRNAs such U3, U8 and U14 snoRNAs. Part of the small subunit (SSU) processome, first precursor of the small eukaryotic ribosomal subunit. During the assembly of the SSU processome in the nucleolus, many ribosome biogenesis factors, an RNA chaperone and ribosomal proteins associate with the nascent pre-rRNA and work in concert to generate RNA folding, modifications, rearrangements and cleavage as well as targeted degradation of pre-ribosomal RNA by the RNA exosome. Core component of box C/D small nucleolar ribonucleoprotein (snoRNP) complexes that function in methylation of multiple sites on ribosomal RNAs (rRNAs) and messenger RNAs (mRNAs). The chain is Nucleolar protein 56 from Homo sapiens (Human).